The sequence spans 349 residues: Glycerol-3-phosphate dehydrogenase [NAD(+)], cytoplasmic (349 aa).

Residues 10 to 15, phenylalanine 41, and phenylalanine 97 each bind NAD(+); that span reads GSGNWG. Lysine 120 is a substrate binding site. Alanine 153 serves as a coordination point for NAD(+). A Phosphoserine modification is found at serine 154. Lysine 204 (proton acceptor) is an active-site residue. Arginine 269 is an NAD(+) binding site. 269–270 contacts substrate; it reads RN. Lysine 289 is modified (N6-succinyllysine). Residues lysine 296 and glutamine 298 each coordinate NAD(+). The residue at position 326 (tyrosine 326) is a Phosphotyrosine.

The protein belongs to the NAD-dependent glycerol-3-phosphate dehydrogenase family. As to quaternary structure, homodimer. In terms of tissue distribution, expressed in liver (at protein level).

It localises to the cytoplasm. The enzyme catalyses sn-glycerol 3-phosphate + NAD(+) = dihydroxyacetone phosphate + NADH + H(+). Inhibited by zinc ions and sulfate. In terms of biological role, has glycerol-3-phosphate dehydrogenase activity. The protein is Glycerol-3-phosphate dehydrogenase [NAD(+)], cytoplasmic of Homo sapiens (Human).